Here is a 323-residue protein sequence, read N- to C-terminus: Acetyl-coenzyme A carboxylase carboxyl transferase subunit alpha (323 aa).

Residues 39–293 form the CoA carboxyltransferase C-terminal domain; the sequence is RLSKKSQQLT…RRALADSLRQ (255 aa).

This sequence belongs to the AccA family. As to quaternary structure, acetyl-CoA carboxylase is a heterohexamer composed of biotin carboxyl carrier protein (AccB), biotin carboxylase (AccC) and two subunits each of ACCase subunit alpha (AccA) and ACCase subunit beta (AccD).

The protein resides in the cytoplasm. It carries out the reaction N(6)-carboxybiotinyl-L-lysyl-[protein] + acetyl-CoA = N(6)-biotinyl-L-lysyl-[protein] + malonyl-CoA. It functions in the pathway lipid metabolism; malonyl-CoA biosynthesis; malonyl-CoA from acetyl-CoA: step 1/1. Component of the acetyl coenzyme A carboxylase (ACC) complex. First, biotin carboxylase catalyzes the carboxylation of biotin on its carrier protein (BCCP) and then the CO(2) group is transferred by the carboxyltransferase to acetyl-CoA to form malonyl-CoA. This chain is Acetyl-coenzyme A carboxylase carboxyl transferase subunit alpha, found in Paraburkholderia phymatum (strain DSM 17167 / CIP 108236 / LMG 21445 / STM815) (Burkholderia phymatum).